Here is a 241-residue protein sequence, read N- to C-terminus: Regulatory protein VirG (241 aa).

Residues 3 to 117 form the Response regulatory domain; it reads HVLVIDDDVA…EFLARIRVAL (115 aa). 4-aspartylphosphate is present on Asp-52. The segment at residues 129–229 is a DNA-binding region (ompR/PhoB-type); sequence RRSFYFADWT…ARGAGYFFDA (101 aa).

Phosphorylated by wide host range (WHR) VirA protein.

It is found in the cytoplasm. VirG is required for the positive regulation of at least two vir loci encoded by the Ri plasmid of A.rhizogenes. In Rhizobium rhizogenes (Agrobacterium rhizogenes), this protein is Regulatory protein VirG (virG).